A 279-amino-acid polypeptide reads, in one-letter code: Putative pyruvate, phosphate dikinase regulatory protein (279 aa).

ADP is bound at residue G153 to T160.

This sequence belongs to the pyruvate, phosphate/water dikinase regulatory protein family. PDRP subfamily.

It carries out the reaction N(tele)-phospho-L-histidyl/L-threonyl-[pyruvate, phosphate dikinase] + ADP = N(tele)-phospho-L-histidyl/O-phospho-L-threonyl-[pyruvate, phosphate dikinase] + AMP + H(+). The catalysed reaction is N(tele)-phospho-L-histidyl/O-phospho-L-threonyl-[pyruvate, phosphate dikinase] + phosphate + H(+) = N(tele)-phospho-L-histidyl/L-threonyl-[pyruvate, phosphate dikinase] + diphosphate. In terms of biological role, bifunctional serine/threonine kinase and phosphorylase involved in the regulation of the pyruvate, phosphate dikinase (PPDK) by catalyzing its phosphorylation/dephosphorylation. This chain is Putative pyruvate, phosphate dikinase regulatory protein, found in Rhodopseudomonas palustris (strain ATCC BAA-98 / CGA009).